A 159-amino-acid polypeptide reads, in one-letter code: Ribosomal RNA large subunit methyltransferase H (159 aa).

Residues Gly108 and 127 to 132 (FSKMTF) contribute to the S-adenosyl-L-methionine site.

Belongs to the RNA methyltransferase RlmH family. Homodimer.

It is found in the cytoplasm. The enzyme catalyses pseudouridine(1915) in 23S rRNA + S-adenosyl-L-methionine = N(3)-methylpseudouridine(1915) in 23S rRNA + S-adenosyl-L-homocysteine + H(+). Functionally, specifically methylates the pseudouridine at position 1915 (m3Psi1915) in 23S rRNA. This is Ribosomal RNA large subunit methyltransferase H from Clostridium beijerinckii (strain ATCC 51743 / NCIMB 8052) (Clostridium acetobutylicum).